Here is a 185-residue protein sequence, read N- to C-terminus: Ribosome-recycling factor (185 aa).

It belongs to the RRF family.

Its subcellular location is the cytoplasm. Its function is as follows. Responsible for the release of ribosomes from messenger RNA at the termination of protein biosynthesis. May increase the efficiency of translation by recycling ribosomes from one round of translation to another. The polypeptide is Ribosome-recycling factor (Legionella pneumophila (strain Corby)).